We begin with the raw amino-acid sequence, 67 residues long: Phycobilisome 7.8 kDa linker polypeptide, allophycocyanin-associated, core (67 aa).

One can recognise a CpcD-like domain in the interval 1-56; sequence MRMFRITACLPSPSKIRTQRELQNTFFTKLVPYDAWFREQQRIQKLGGKIIKVELA.

The protein belongs to the phycobilisome linker protein family.

Its subcellular location is the cellular thylakoid membrane. Functionally, rod linker protein, associated with allophycocyanin. Linker polypeptides determine the state of aggregation and the location of the disk-shaped phycobiliprotein units within the phycobilisome and modulate their spectroscopic properties in order to mediate a directed and optimal energy transfer. This is Phycobilisome 7.8 kDa linker polypeptide, allophycocyanin-associated, core (apcC) from Synechococcus sp. (strain ATCC 27144 / PCC 6301 / SAUG 1402/1) (Anacystis nidulans).